A 674-amino-acid polypeptide reads, in one-letter code: Cysteine-rich receptor-like protein kinase 6 (674 aa).

The signal sequence occupies residues 1 to 24; the sequence is MSSLISFNFLFLFSFLTSSFTASA. The Extracellular portion of the chain corresponds to 25 to 289; that stretch reads QDPFYLNHYC…LPGKSGNSTV (265 aa). Gnk2-homologous domains lie at 28 to 132 and 139 to 245; these read FYLN…HKNI and NEGE…LYPF. N-linked (GlcNAc...) asparagine glycans are attached at residues N36, N43, N61, N70, N104, N178, and N247. The segment covering 254-266 has biased composition (pro residues); sequence PPLPPPPPPPPPR. Residues 254–284 form a disordered region; that stretch reads PPLPPPPPPPPPRESLVSTPPISSSSLPGKS. Low complexity predominate over residues 268 to 284; it reads SLVSTPPISSSSLPGKS. A glycan (N-linked (GlcNAc...) asparagine) is linked at N286. Residues 290–310 traverse the membrane as a helical segment; the sequence is LVVAVVVLAVLLFIALVGYCF. Over 311–674 the chain is Cytoplasmic; that stretch reads LAKKKKKTFD…DESITDLYPR (364 aa). One can recognise a Protein kinase domain in the interval 351 to 637; sequence FAESNKIGRG…TLPVPRQPGF (287 aa). Residues 357-365 and K379 each bind ATP; that span reads IGRGGFGEV. Y424 carries the phosphotyrosine modification. Catalysis depends on D476, which acts as the Proton acceptor. S480 is subject to Phosphoserine. Phosphothreonine is present on T516. Phosphotyrosine is present on Y524. Residues 648–674 form a disordered region; it reads LDSDQSTTTKSFPASIDDESITDLYPR. Residues 650-659 show a composition bias toward polar residues; it reads SDQSTTTKSF.

The protein belongs to the protein kinase superfamily. Ser/Thr protein kinase family. CRK subfamily.

Its subcellular location is the membrane. It carries out the reaction L-seryl-[protein] + ATP = O-phospho-L-seryl-[protein] + ADP + H(+). It catalyses the reaction L-threonyl-[protein] + ATP = O-phospho-L-threonyl-[protein] + ADP + H(+). This is Cysteine-rich receptor-like protein kinase 6 (CRK6) from Arabidopsis thaliana (Mouse-ear cress).